Reading from the N-terminus, the 1466-residue chain is Immediate-early protein 2 (1466 aa).

Disordered regions lie at residues 1 to 21 (MEPAKPSGNNMGSNDERMQDY), 223 to 242 (NRGYDYNFRHHSYRPRGGNG), 339 to 370 (YNHPTKAQTIPETTKTKKHKATKDNETSRGNQ), 428 to 472 (RCRS…VTKA), 517 to 965 (RSKT…TSIN), 1005 to 1068 (FRPH…CRSN), 1086 to 1179 (SRTR…SENA), and 1191 to 1223 (TTSHLHQKQNVKLHNTKKCKKKRPRDDDSDSSI). The segment covering 339–350 (YNHPTKAQTIPE) has biased composition (polar residues). A compositionally biased stretch (basic residues) spans 428 to 437 (RCRSVQKKKE). Composition is skewed to basic and acidic residues over residues 443-472 (NKHDENHASSRSDLKERKSNEHEDKAVTKA) and 536-553 (PTKDNSYKKHHDSKDNYP). Composition is skewed to polar residues over residues 583–595 (KNVSGKATSTSPK) and 640–665 (KNHTASADKNLTDNSPIRSNLNPTAF). The segment covering 666-681 (NKSNNNKSITNSTSNS) has biased composition (low complexity). Residues 696 to 713 (NESKDPNRTCGKNSDKHL) show a composition bias toward basic and acidic residues. 2 stretches are compositionally biased toward low complexity: residues 720 to 756 (ASKRAPSRASSRTSSRASSRASSRASSRASSRASSRA) and 763 to 772 (RASSRAPSRA). Over residues 773 to 790 (SSRDSSRASSRDSSRDSN) the composition is skewed to basic and acidic residues. A compositionally biased stretch (low complexity) spans 791-800 (RASSKASSRA). A compositionally biased stretch (basic and acidic residues) spans 801–814 (SSRDSSRASSRDSS). Low complexity-rich tracts occupy residues 826–884 (SRAS…SSRA) and 926–940 (SRASSRASSRASSRA). A compositionally biased stretch (polar residues) spans 955–965 (RQTPPHDTSIN). The tract at residues 989–1037 (ARLQCFNHNDQFYNPRFRPHIRTNRKKSESTNDTDSESSMSRCKSHCRN) is interaction with human UBE2I. 3 stretches are compositionally biased toward low complexity: residues 1019–1029 (TNDTDSESSMS), 1053–1068 (GSSSISSSIEENCRSN), and 1086–1110 (SRTRSSSSSSSSSSASLSCSKSTLK). The segment covering 1116 to 1131 (QNRDNKQIKSKSDSKH) has biased composition (basic and acidic residues). The segment covering 1162 to 1177 (HNSSPFNTHEQSNHSE) has biased composition (polar residues). Basic residues predominate over residues 1195–1213 (LHQKQNVKLHNTKKCKKKR).

It belongs to the herpesviridae IE2 family. Interacts with human UBE2I in the nucleus. Although this interaction does not promote IE2 sumoylation, it represses transactivation activity.

The protein resides in the host nucleus. Functionally, transcriptional transactivator. This is Immediate-early protein 2 (U90/U86) from Homo sapiens (Human).